We begin with the raw amino-acid sequence, 68 residues long: Translational regulator CsrA 1 (68 aa).

It belongs to the CsrA/RsmA family. Homodimer; the beta-strands of each monomer intercalate to form a hydrophobic core, while the alpha-helices form wings that extend away from the core.

It localises to the cytoplasm. Functionally, a key translational regulator that binds mRNA to regulate translation initiation and/or mRNA stability. Mediates global changes in gene expression, shifting from rapid growth to stress survival by linking envelope stress, the stringent response and the catabolite repression systems. Usually binds in the 5'-UTR; binding at or near the Shine-Dalgarno sequence prevents ribosome-binding, repressing translation, binding elsewhere in the 5'-UTR can activate translation and/or stabilize the mRNA. Its function is antagonized by small RNA(s). The sequence is that of Translational regulator CsrA 1 from Coxiella burnetii (strain RSA 493 / Nine Mile phase I).